A 238-amino-acid chain; its full sequence is ATP synthase subunit a (238 aa).

The next 5 membrane-spanning stretches (helical) occupy residues 15–35 (IFNLTMLAMTLLIVGVIFVFI), 76–96 (YSLFFLCLFLFMVIANNLGLM), 111–131 (PTANLQYDLTLSFLVILLTHI), 167–187 (LALRIFGNIFAGEVMTSLLLL), and 208–230 (AFSVFISCIQAYVFTLLTSVYLG).

This sequence belongs to the ATPase A chain family. F-type ATPases have 2 components, CF(1) - the catalytic core - and CF(0) - the membrane proton channel. CF(1) has five subunits: alpha(3), beta(3), gamma(1), delta(1), epsilon(1). CF(0) has three main subunits: a(1), b(2) and c(9-12). The alpha and beta chains form an alternating ring which encloses part of the gamma chain. CF(1) is attached to CF(0) by a central stalk formed by the gamma and epsilon chains, while a peripheral stalk is formed by the delta and b chains.

The protein resides in the cell membrane. Functionally, key component of the proton channel; it plays a direct role in the translocation of protons across the membrane. The polypeptide is ATP synthase subunit a (Streptococcus pneumoniae (strain 70585)).